The primary structure comprises 488 residues: MAEATDVVLVGGGIMSATLGVLLKELEPSWEITLIERLEDVALESSNAWNNAGTGHSALCELNYAPLGADGVINPARALNIAEQFHVSRQFWATLVAEGKLEDNSFINAVPHMSLVMNEDHCRYLQKRYDVFKTQKLFENMEFSTDRNKISDWAPLIMRGRDENQPVAANYSAEGTDVDFGRLTRQMVKYLQGKGVKTEFNRHVEDIKRESDGAWVLKTADTRNPDWQLTLRTRFLFLGAGGGALTLLQKSGIPEGKGYGGLPVSGLFFRNSNPETAEQHNAKVYGQASVGAPPMSVPHLDTRNVDGKRHLMFGPYAGFRSNFLKQGSFMDLPLSIHMDNLYPMLRAGWANMPLTKYLLGELRKTKEERFASLLEYYPEANPDDWELITAGQRVQIIKKDSEKGGVLQFGTEIVAHADGSLAALLGASPGASTAVPLMIRLMHQCFPERAPSWEGRLKELVPGYGIKLNENPERADEIIAYTAKVLDI.

The protein belongs to the MQO family. FAD is required as a cofactor.

The enzyme catalyses (S)-malate + a quinone = a quinol + oxaloacetate. Its pathway is carbohydrate metabolism; tricarboxylic acid cycle; oxaloacetate from (S)-malate (quinone route): step 1/1. The sequence is that of Probable malate:quinone oxidoreductase from Neisseria gonorrhoeae (strain ATCC 700825 / FA 1090).